A 305-amino-acid chain; its full sequence is Undecaprenyl-diphosphatase (305 aa).

A run of 8 helical transmembrane segments spans residues glycine 18–valine 38, tyrosine 55–tryptophan 75, tryptophan 103–phenylalanine 123, proline 130–leucine 150, glycine 187–isoleucine 207, phenylalanine 225–leucine 245, phenylalanine 246–valine 266, and leucine 284–leucine 304.

Belongs to the UppP family.

The protein localises to the cell membrane. The enzyme catalyses di-trans,octa-cis-undecaprenyl diphosphate + H2O = di-trans,octa-cis-undecaprenyl phosphate + phosphate + H(+). In terms of biological role, catalyzes the dephosphorylation of undecaprenyl diphosphate (UPP). Confers resistance to bacitracin. This chain is Undecaprenyl-diphosphatase, found in Mycobacterium avium (strain 104).